The sequence spans 456 residues: MSFTIAIIGRPNVGKSTLFNRLVGQKLALVDDMPGVTRDRREGEAKLHDLHFTIIDTAGLDEGPKGSLTARMQEQTETAIALADALFFVIDARVGLTPADRAFADFARRADKPVLLLANKSEGKHGELGAMESYALGLGDPIQISAEHGEGMGELYDALSKIVPPSDDEDDEREETDEERASRPIRVAIVGRPNAGKSTLINHLLGEERLLTSPEAGTTRDSIAVEVEWKGRGFRIFDTAGLRRRSRIEEKLEKLSVADALRAVRFAEVVVLMLDAQNRFEEQDLRIADLVEREGRALVLAVNKWDLMEAQPGQISALRRDADHWLPQITGAPIVAVSGLMGEGIDRLMQAIVEAYAVWNRRVPTAALNRWFEGAIANNPPPAVSGRRLKLNYITQTKARPPSFVLFCSRADAIPQSYLRYLVNSMRETFELPGTPVRITLREKANPFAHKRKRPN.

EngA-type G domains follow at residues 3-167 (FTIA…PPSD) and 185-360 (IRVA…AVWN). GTP-binding positions include 9 to 16 (GRPNVGKS), 56 to 60 (DTAGL), and 119 to 122 (NKSE). Residues 162 to 181 (IVPPSDDEDDEREETDEERA) are disordered. A compositionally biased stretch (acidic residues) spans 166–178 (SDDEDDEREETDE). GTP is bound by residues 191 to 198 (GRPNAGKS), 238 to 242 (DTAGL), and 303 to 306 (NKWD). One can recognise a KH-like domain in the interval 361-445 (RRVPTAALNR…PVRITLREKA (85 aa)).

This sequence belongs to the TRAFAC class TrmE-Era-EngA-EngB-Septin-like GTPase superfamily. EngA (Der) GTPase family. In terms of assembly, associates with the 50S ribosomal subunit.

GTPase that plays an essential role in the late steps of ribosome biogenesis. In Bradyrhizobium sp. (strain ORS 278), this protein is GTPase Der.